Consider the following 397-residue polypeptide: Protein Brevis radix-like 1 (397 aa).

Disordered regions lie at residues 14–37 and 105–148; these read GAPP…AGEC and RAGS…EDDE. Over residues 124–148 the composition is skewed to acidic residues; sequence AGDEEEEEEEEEEEGTTADGSEDDE. The 56-residue stretch at 150–205 folds into the BRX 1 domain; that stretch reads KEWVAQVEPGVLITFLSLPEGGNDLKRIRFSREIFNKWQAQRWWAENYEKVMELYN. Disordered stretches follow at residues 212 to 278 and 300 to 342; these read QTPL…QQHH and SISG…DQER. Basic and acidic residues predominate over residues 220–230; sequence KSEDESLKEDI. The segment covering 309 to 320 has biased composition (low complexity); sequence SSMDASMRSSSS. Residues 342 to 397 enclose the BRX 2 domain; that stretch reads REWVEEDEPGVYITIRALPGGIRELRRVRFSREKFSEMHARLWWEENRARIHDQYL.

The protein belongs to the BRX family.

The protein localises to the nucleus. In Oryza sativa subsp. japonica (Rice), this protein is Protein Brevis radix-like 1 (BRXL1).